A 722-amino-acid chain; its full sequence is Lysophospholipid acyltransferase 6 (722 aa).

A run of 5 helical transmembrane segments spans residues 25–45 (MVGL…ALFL), 62–84 (LRHT…QQAI), 104–123 (IVQR…VHLM), 180–200 (ALEY…PLVF), and 243–263 (KVVG…IYPV). Active-site residues include asparagine 349 and histidine 381. 3 helical membrane passes run 378–398 (AVWH…AVVV), 424–444 (ILTC…FVLL), and 452–472 (LYLR…FILP). Composition is skewed to polar residues over residues 485–511 (NGNG…STAA) and 549–570 (VEQP…QQQP). 2 disordered regions span residues 485–582 (NGNG…PTCA) and 650–687 (NGAI…DLHP).

This sequence belongs to the membrane-bound acyltransferase family.

The protein resides in the endoplasmic reticulum. It is found in the membrane. It carries out the reaction a 1-acyl-sn-glycero-3-phospho-L-serine + an acyl-CoA = a 1,2-diacyl-sn-glycero-3-phospho-L-serine + CoA. It catalyses the reaction 1-(9Z-octadecenoyl)-sn-glycero-3-phospho-L-serine + (9Z)-hexadecenoyl-CoA = 1-(9Z-octadecenoyl)-2-(9Z-hexadecenoyl)-sn-glycero-3-phospho-L-serine + CoA. The enzyme catalyses 1-(9Z-octadecenoyl)-sn-glycero-3-phospho-L-serine + (9Z)-octadecenoyl-CoA = 1,2-di-(9Z)-octadecenoyl-sn-glycero-3-phospho-L-serine + CoA. The catalysed reaction is a 1-acyl-sn-glycero-3-phosphocholine + an acyl-CoA = a 1,2-diacyl-sn-glycero-3-phosphocholine + CoA. It carries out the reaction 1-hexadecanoyl-sn-glycero-3-phosphocholine + (9Z)-octadecenoyl-CoA = 1-hexadecanoyl-2-(9Z-octadecenoyl)-sn-glycero-3-phosphocholine + CoA. It catalyses the reaction (9Z)-hexadecenoyl-CoA + 1-hexadecanoyl-sn-glycero-3-phosphocholine = 1-hexadecanoyl-2-(9Z-hexadecenoyl)-sn-glycero-3-phosphocholine + CoA. The enzyme catalyses a 1-acyl-sn-glycero-3-phosphoethanolamine + an acyl-CoA = a 1,2-diacyl-sn-glycero-3-phosphoethanolamine + CoA. The catalysed reaction is 1-hexadecanoyl-sn-glycero-3-phosphoethanolamine + (9Z)-octadecenoyl-CoA = 1-hexadecanoyl-2-(9Z-octadecenoyl)-sn-glycero-3-phosphoethanolamine + CoA. It carries out the reaction 1-hexadecanoyl-sn-glycero-3-phosphoethanolamine + (9Z,12Z)-octadecadienoyl-CoA = 1-hexadecanoyl-2-(9Z,12Z-octadecadienoyl)-sn-glycero-3-phosphoethanolamine + CoA. It catalyses the reaction 1-hexadecanoyl-sn-glycero-3-phosphoethanolamine + (9Z)-hexadecenoyl-CoA = 1-hexadecanoyl-2-(9Z)-hexadecenoyl-sn-glycero-3-phosphoethanolamine + CoA. The enzyme catalyses 1-(9Z-octadecenoyl)-sn-glycero-3-phospho-(1'-sn-glycerol) + (9Z)-octadecenoyl-CoA = 1,2-di-(9Z-octadecenoyl)-sn-glycero-3-phospho-(1'-sn-glycerol) + CoA. The protein operates within lipid metabolism; phospholipid metabolism. Its function is as follows. Acyltransferase with broad-specificity, that mediates the acylation of lysophospholipids to produce phospholipids (glycerophospholipids). Converts lysophosphatidylserine (1-acyl-2-hydroxy-sn-glycero-3-phospho-L-serine or LPS) to phosphatidylserine (1,2-diacyl-sn-glycero-3-phospho-L-serine or PS) (LPSAT activity), lysophosphatidylcholine (1-acyl-sn-glycero-3-phosphocholine or LPC) to phosphatidylcholine (1,2-diacyl-sn-glycero-3-phosphocholine or PC) (LPCAT activity), also lysophosphatidylethanolamine (1-acyl-sn-glycero-3-phosphochethanolamine or LPE) to phosphatidylchethanolamine (LPEAT activity) and lysophosphatidylglycerol (1-acyl-2-hydroxy-sn-glycero-3-phospho-(1'-sn-glycerol) or LPG) to phosphatidylglycerol (1,2-diacyl-sn-glycero-3-phospho-(1'-sn-glycerol) or PG) (LPGAT activity). Has a preference for unsaturated fatty acids of at least 16 carbons such as oleoyl-CoA ((9Z)-octadecenoyl-CoA) and palmitoleoyl-CoA ((9Z)-hexadecenoyl-CoA). Glycerophospholipids are important structural and functional components of cellular membrane, acyl-chain remodeling regulates the molecular species distribution of glycerophospholipids which can affect membrane fluidity and curvature. Essential for fertility and viability together with Nessy protein (Nes). This Drosophila melanogaster (Fruit fly) protein is Lysophospholipid acyltransferase 6.